The primary structure comprises 361 residues: MFAKGKGSAVPSDGQAREKLALYVYEYLLHVGAQKSAQTFLSEIRWEKNITLGEPPGFLHSWWCVFWDLYCAAPERRDTCEHSSEAKAFHDYSAAAAPSPVLGNIPPNDGMPGGPIPPGFFQPFMSPRYAGGPRPPIRMGNQPPGGVPGTQPLMPNSMDPTRQQGHPNMGGSMQRMNPPRGMGPMGPGPQNYGSGMRPPPNSLGPAMPGINMGPGAGRPWPNPNSANSIPYSSSSPGTYVGPPGGGGPPGTPIMPSPADSTNSSDNIYTMINPVPPGGSRSNFPMGPGSDGPMGGMGGMEPHHMNGSLGSGDINGLPKNSPNNISGISNPPGTPRDDGELGGNFLHSFQNDNYSPSMTMSV.

Methionine 1 carries the post-translational modification N-acetylmethionine. One can recognise a LisH domain in the interval 16 to 48; that stretch reads AREKLALYVYEYLLHVGAQKSAQTFLSEIRWEK. Arginine 128, arginine 134, and arginine 138 each carry asymmetric dimethylarginine. Disordered stretches follow at residues 140-166 and 184-361; these read GNQPPGGVPGTQPLMPNSMDPTRQQGH and PMGP…TMSV. Low complexity predominate over residues 223-241; that stretch reads PNSANSIPYSSSSPGTYVG. The span at 245-255 shows a compositional bias: pro residues; that stretch reads GGGPPGTPIMP. Positions 258–269 are enriched in polar residues; sequence ADSTNSSDNIYT. Over residues 288 to 298 the composition is skewed to gly residues; the sequence is GSDGPMGGMGG. Residues 319-330 show a composition bias toward low complexity; the sequence is NSPNNISGISNP. A phosphoserine mark is found at serine 320, serine 325, and serine 328. Position 333 is a phosphothreonine (threonine 333). The segment covering 346-361 has biased composition (polar residues); it reads HSFQNDNYSPSMTMSV. 2 positions are modified to phosphoserine: serine 354 and serine 360.

It localises to the nucleus. In terms of biological role, may be involved in transcription regulation of the alpha 2(I) collagen gene where it binds to the single-stranded polypyrimidine sequences in the promoter region. The protein is Single-stranded DNA-binding protein 3 (Ssbp3) of Rattus norvegicus (Rat).